A 317-amino-acid chain; its full sequence is Acetyl-coenzyme A carboxylase carboxyl transferase subunit alpha (317 aa).

Positions 38–292 constitute a CoA carboxyltransferase C-terminal domain; it reads TLEERLARLE…DNIIKQSLVE (255 aa).

The protein belongs to the AccA family. As to quaternary structure, acetyl-CoA carboxylase is a heterohexamer composed of biotin carboxyl carrier protein (AccB), biotin carboxylase (AccC) and two subunits each of ACCase subunit alpha (AccA) and ACCase subunit beta (AccD).

The protein localises to the cytoplasm. The enzyme catalyses N(6)-carboxybiotinyl-L-lysyl-[protein] + acetyl-CoA = N(6)-biotinyl-L-lysyl-[protein] + malonyl-CoA. It functions in the pathway lipid metabolism; malonyl-CoA biosynthesis; malonyl-CoA from acetyl-CoA: step 1/1. In terms of biological role, component of the acetyl coenzyme A carboxylase (ACC) complex. First, biotin carboxylase catalyzes the carboxylation of biotin on its carrier protein (BCCP) and then the CO(2) group is transferred by the carboxyltransferase to acetyl-CoA to form malonyl-CoA. The sequence is that of Acetyl-coenzyme A carboxylase carboxyl transferase subunit alpha from Oceanobacillus iheyensis (strain DSM 14371 / CIP 107618 / JCM 11309 / KCTC 3954 / HTE831).